The primary structure comprises 621 residues: uncharacterized protein (621 aa).

Its subcellular location is the plastid. The protein localises to the chloroplast. This is an uncharacterized protein from Porphyra purpurea (Red seaweed).